The following is a 278-amino-acid chain: NAD kinase (278 aa).

Catalysis depends on aspartate 67, which acts as the Proton acceptor. NAD(+) contacts are provided by residues aspartate 67–glycine 68, arginine 72, asparagine 137–glutamate 138, lysine 148, arginine 165, aspartate 167, threonine 178–serine 183, alanine 202, and glutamine 237.

It belongs to the NAD kinase family. A divalent metal cation serves as cofactor.

It localises to the cytoplasm. It catalyses the reaction NAD(+) + ATP = ADP + NADP(+) + H(+). Functionally, involved in the regulation of the intracellular balance of NAD and NADP, and is a key enzyme in the biosynthesis of NADP. Catalyzes specifically the phosphorylation on 2'-hydroxyl of the adenosine moiety of NAD to yield NADP. The protein is NAD kinase of Thermococcus kodakarensis (strain ATCC BAA-918 / JCM 12380 / KOD1) (Pyrococcus kodakaraensis (strain KOD1)).